The following is a 216-amino-acid chain: Uracil phosphoribosyltransferase (216 aa).

CTP contacts are provided by residues 29 to 30 (RK) and Arg-37. 30 to 34 (KNLVR) is a GTP binding site. Residue Arg-80 coordinates 5-phospho-alpha-D-ribose 1-diphosphate. Residue 87–96 (EGLLKAFPKA) participates in CTP binding. Residues Arg-105 and 140 to 148 (DPMIATAST) each bind 5-phospho-alpha-D-ribose 1-diphosphate. Residues Ile-203 and 208–210 (GDA) each bind uracil. Residue Asp-209 participates in 5-phospho-alpha-D-ribose 1-diphosphate binding.

It belongs to the UPRTase family. Homotetramer. It depends on Mg(2+) as a cofactor.

The catalysed reaction is UMP + diphosphate = 5-phospho-alpha-D-ribose 1-diphosphate + uracil. It participates in pyrimidine metabolism; UMP biosynthesis via salvage pathway; UMP from uracil: step 1/1. Allosterically activated by GTP. Inhibited by CTP and UMP in combination. Catalyzes the conversion of uracil and 5-phospho-alpha-D-ribose 1-diphosphate (PRPP) to UMP and diphosphate. This is Uracil phosphoribosyltransferase (upp) from Saccharolobus solfataricus (strain ATCC 35092 / DSM 1617 / JCM 11322 / P2) (Sulfolobus solfataricus).